A 232-amino-acid polypeptide reads, in one-letter code: 5'-methylthioadenosine/S-adenosylhomocysteine nucleosidase (232 aa).

The active-site Proton acceptor is the E12. Residues G78, I152, and 173–174 (ME) each bind substrate. The active-site Proton donor is the D197.

It belongs to the PNP/UDP phosphorylase family. MtnN subfamily. Homodimer.

It catalyses the reaction S-adenosyl-L-homocysteine + H2O = S-(5-deoxy-D-ribos-5-yl)-L-homocysteine + adenine. The catalysed reaction is S-methyl-5'-thioadenosine + H2O = 5-(methylsulfanyl)-D-ribose + adenine. It carries out the reaction 5'-deoxyadenosine + H2O = 5-deoxy-D-ribose + adenine. The protein operates within amino-acid biosynthesis; L-methionine biosynthesis via salvage pathway; S-methyl-5-thio-alpha-D-ribose 1-phosphate from S-methyl-5'-thioadenosine (hydrolase route): step 1/2. Its function is as follows. Catalyzes the irreversible cleavage of the glycosidic bond in both 5'-methylthioadenosine (MTA) and S-adenosylhomocysteine (SAH/AdoHcy) to adenine and the corresponding thioribose, 5'-methylthioribose and S-ribosylhomocysteine, respectively. Also cleaves 5'-deoxyadenosine, a toxic by-product of radical S-adenosylmethionine (SAM) enzymes, into 5-deoxyribose and adenine. Thus, is required for in vivo function of the radical SAM enzymes biotin synthase and lipoic acid synthase, that are inhibited by 5'-deoxyadenosine accumulation. The sequence is that of 5'-methylthioadenosine/S-adenosylhomocysteine nucleosidase from Cronobacter sakazakii (strain ATCC BAA-894) (Enterobacter sakazakii).